We begin with the raw amino-acid sequence, 395 residues long: Probable beta-1,3-galactosyltransferase 8 (395 aa).

A helical; Signal-anchor for type II membrane protein membrane pass occupies residues 5–27 (AASGKAIIVLCLASFLAGSLFMS). N117 carries an N-linked (GlcNAc...) asparagine glycan.

This sequence belongs to the glycosyltransferase 31 family. The cofactor is Mn(2+).

The protein localises to the golgi apparatus membrane. The protein operates within protein modification; protein glycosylation. Beta-1,3-galactosyltransferase that transfers galactose from UDP-galactose to substrates with a terminal glycosyl residue. The chain is Probable beta-1,3-galactosyltransferase 8 (B3GALT8) from Arabidopsis thaliana (Mouse-ear cress).